The primary structure comprises 738 residues: MKRTLPTLSALALSMSLALAAGQTQAAETTTNSYWWPEQLDLSPLRQHGSESNPYGADYDYAKAFGSLDLVAVKADIKTVLTTSQDWWPADYGHYGPFFIRMAWHSAGVYRIFDGRGGASGGQQRFEPLNSWPDNVNLDKARRLLWPIKQKYGSKISWADLMVLAGNVSLESMGFKTFGFAGGRTDDWEAERVDWGHEKKWLDNKRHNEKGELAKPLGATQMGLIYVNPEGPNGVPDPLAAARDIRETFGRMAMNDEETVALIAGGHTFGKAHGAHDPAKCVGADPAAAGVEAQGLGWKNKCGKGHSEDTVTSGLEGAWSVSPTQWTMQYLDNLYGFEWVQSKSPAGHIQWIPANGAGDNLVPDAHVAGKRHAPIMFTTDIALKEDPSYREITSRFRKDPKAFELAFAKAWFKLTHRDMGPKTRYLGSDVPAEALIWQDPIPALDHAVIDTNDIAALKSAILASGIAVPELVRTAWASAASFRGTDMRGGANGARLRLEPQRSWEVNNPEELAKVLPKLEKIQKDFNKSLKGGKKVSLADVIVLAGGTAIEQAARSAGYSVTVPFTPGRMDATTAQTDVSSFAVLEPKADAFRNFFSEESYLPPAEALVEKATQLTLSVPEMTALVGGLRVLDANSNKAKHGVFTDKPGNLSNDFFVNLLDMSTRWEKSPREAGLYQGFDRQSGKLRWTATPVDLIFGSHAELRAVAEVYGANDGKDRFVEDFIAAWTKVMNLDRFDI.

The N-terminal stretch at 1 to 26 (MKRTLPTLSALALSMSLALAAGQTQA) is a signal peptide. Residues 104-226 (WHSAGVYRIF…LGATQMGLIY (123 aa)) constitute a cross-link (tryptophyl-tyrosyl-methioninium (Trp-Tyr) (with M-252)). The active-site Proton acceptor is the histidine 105. The tryptophyl-tyrosyl-methioninium (Tyr-Met) (with W-104) cross-link spans 226–252 (YVNPEGPNGVPDPLAAARDIRETFGRM). Histidine 267 is a heme b binding site.

Belongs to the peroxidase family. Peroxidase/catalase subfamily. As to quaternary structure, homodimer or homotetramer. The cofactor is heme b. Post-translationally, formation of the three residue Trp-Tyr-Met cross-link is important for the catalase, but not the peroxidase activity of the enzyme.

The enzyme catalyses H2O2 + AH2 = A + 2 H2O. It carries out the reaction 2 H2O2 = O2 + 2 H2O. In terms of biological role, bifunctional enzyme with both catalase and broad-spectrum peroxidase activity. The protein is Catalase-peroxidase 2 of Shewanella amazonensis (strain ATCC BAA-1098 / SB2B).